The chain runs to 440 residues: Chitinase-like protein Idgf2 (440 aa).

Residues 1-20 (MKAWIWFTFVACLFAASTEA) form the signal peptide. The 419-residue stretch at 22–440 (SNLVCYYDSS…PILRAIKYRL (419 aa)) folds into the GH18 domain. Cysteines 26 and 53 form a disulfide. A glycan (N-linked (GlcNAc...) asparagine) is linked at asparagine 220. An intrachain disulfide couples cysteine 342 to cysteine 425.

It belongs to the glycosyl hydrolase 18 family. IDGF subfamily. In terms of processing, glycosylated. As to expression, primarily expressed in yolk cells and fat body. In larvae, it is expressed in the imaginal ring and weakly expressed in imaginal disks. More strongly expressed than Idgf1 and Idgf3.

Its subcellular location is the secreted. Its function is as follows. Cooperates with insulin-like peptides to stimulate the proliferation, polarization and motility of imaginal disk cells. May act by stabilizing the binding of insulin-like peptides to its receptor through a simultaneous interaction with both molecules to form a multiprotein signaling complex. This Drosophila melanogaster (Fruit fly) protein is Chitinase-like protein Idgf2 (Idgf2).